The primary structure comprises 369 residues: GTPase Obg (369 aa).

One can recognise an Obg domain in the interval 1 to 159 (MKFVDEVTID…KNLKLELRVL (159 aa)). Residues 160-334 (ADVGLLGMPN…LIHAIYSHVA (175 aa)) form the OBG-type G domain. GTP contacts are provided by residues 166–173 (GMPNAGKS), 191–195 (FTTLH), 213–216 (DIPG), 284–287 (NKLD), and 315–317 (SAL). Mg(2+)-binding residues include Ser-173 and Thr-193. The tract at residues 339–369 (QPEEVPDPRFTTNEDLSEAAPAPDRDDPRFR) is disordered.

This sequence belongs to the TRAFAC class OBG-HflX-like GTPase superfamily. OBG GTPase family. In terms of assembly, monomer. It depends on Mg(2+) as a cofactor.

The protein resides in the cytoplasm. Functionally, an essential GTPase which binds GTP, GDP and possibly (p)ppGpp with moderate affinity, with high nucleotide exchange rates and a fairly low GTP hydrolysis rate. Plays a role in control of the cell cycle, stress response, ribosome biogenesis and in those bacteria that undergo differentiation, in morphogenesis control. The chain is GTPase Obg from Leptothrix cholodnii (strain ATCC 51168 / LMG 8142 / SP-6) (Leptothrix discophora (strain SP-6)).